An 852-amino-acid chain; its full sequence is Genome polyprotein (852 aa).

Short sequence motifs ((L)YPX(n)L motif) lie at residues 167 to 171 (YPHGL) and 200 to 205 (YPVWEL). The segment at 766–836 (MMSRIAAGDL…PRKMKGLFSQ (71 aa)) is involved in P1-2A pentamerization.

It belongs to the picornaviridae polyprotein family. Homodimer. Homomultimer; probably interacts with membranes in a multimeric form. Seems to assemble into amyloid-like fibers. As to quaternary structure, homopentamer. Homooligomer. In terms of assembly, interacts with capsid protein VP2. Interacts with capsid protein VP3. Interacts with capsid protein VP1. Interacts with capsid protein VP3. As to quaternary structure, interacts with capsid protein VP1. Interacts with capsid protein VP2. Post-translationally, specific enzymatic cleavages by viral protease in vivo yield a variety of precursors and mature proteins. Polyprotein processing intermediates are produced, such as P1-2A which is a functional precursor of the structural proteins, VP0 which is a VP4-VP2 precursor, VP1-2A precursor, 3ABC precursor which is a stable and catalytically active precursor of 3A, 3B and 3C proteins, 3AB and 3CD precursors. The assembly signal 2A is removed from VP1-2A by a host protease, possibly host Cathepsin L. This cleavage occurs over a region of 3 amino-acids probably generating VP1 proteins with heterogeneous C-termini. In terms of processing, during virion maturation, immature virions are rendered infectious following cleavage of VP0 into VP4 and VP2. This maturation seems to be an autocatalytic event triggered by the presence of RNA in the capsid and is followed by a conformational change of the particle. The assembly signal 2A is removed from VP1-2A by a host protease, possibly host Cathepsin L in naked virions. This cleavage does not occur in enveloped virions. This cleavage occurs over a region of 3 amino-acids probably generating VP1 proteins with heterogeneous C-termini. Post-translationally, viral protein genome-linked: VPg is uridylylated prior to priming replication into VPg-pUpU. In terms of processing, unlike other picornaviruses, does not seem to be myristoylated.

Its subcellular location is the virion. The protein localises to the host endosome. The protein resides in the host multivesicular body. It is found in the host membrane. Its function is as follows. Capsid proteins VP1, VP2, and VP3 form a closed capsid enclosing the viral positive strand RNA genome. All these proteins contain a beta-sheet structure called beta-barrel jelly roll. Together they form an icosahedral capsid (T=3) composed of 60 copies of each VP1, VP2, and VP3, with a diameter of approximately 300 Angstroms. VP1 is situated at the 12 fivefold axes, whereas VP2 and VP3 are located at the quasi-sixfold axes. The naked capsid interacts with the host receptor HAVCR1 to provide virion attachment to and probably entry into the target cell. Functionally, VP0 precursor is a component of the immature procapsids. In terms of biological role, plays a role in the assembly of the 12 pentamers into an icosahedral structure. Has not been detected in mature virions, supposedly owing to its small size. Precursor component of immature procapsids that corresponds to an extended form of the structural protein VP1. After maturation, possibly by the host Cathepsin L, the assembly signal 2A is cleaved to give rise to the mature VP1 protein. Its function is as follows. Affects membrane integrity and causes an increase in membrane permeability. Functionally, functions as a viroporin. Affects membrane integrity and causes an increase in membrane permeability. Involved in host intracellular membrane rearrangements probably to give rise to the viral factories. Does not disrupt calcium homeostasis or glycoprotein trafficking. Antagonizes the innate immune response of the host by suppressing IFN-beta synthesis, which it achieves by interfering with the RIG-I/IFIH1 pathway. This Cercopithecus hamlyni (Owl-faced monkey) protein is Genome polyprotein.